The primary structure comprises 120 residues: Non-specific lipid-transfer protein (120 aa).

Positions 1–26 (MGVLRSSFVAMMVMYMVLATTPNAEA) are cleaved as a signal peptide. Intrachain disulfides connect C30/C79, C40/C56, C57/C102, and C77/C116.

It belongs to the plant LTP family. In terms of tissue distribution, expressed in protoderm cells of somatic and zygotic embryos, and transiently expressed in epidermal cell layers of leaves, flowers and seeds.

In terms of biological role, plant non-specific lipid-transfer proteins transfer phospholipids as well as galactolipids across membranes. May play a role in wax or cutin deposition in the cell walls of expanding epidermal cells and certain secretory tissues. The polypeptide is Non-specific lipid-transfer protein (EP2) (Daucus carota (Wild carrot)).